The chain runs to 230 residues: Ribonuclease 3 (230 aa).

The region spanning 6-135 (TTELKERYGI…FLGALYLDQK (130 aa)) is the RNase III domain. Glu48 contacts Mg(2+). Asp52 is a catalytic residue. Asp121 and Glu124 together coordinate Mg(2+). Glu124 is a catalytic residue. The DRBM domain occupies 161 to 230 (DHKTQLQEVL…AERALKSIPQ (70 aa)).

Belongs to the ribonuclease III family. In terms of assembly, homodimer. The cofactor is Mg(2+).

It is found in the cytoplasm. It catalyses the reaction Endonucleolytic cleavage to 5'-phosphomonoester.. Its function is as follows. Digests double-stranded RNA. Involved in the processing of primary rRNA transcript to yield the immediate precursors to the large and small rRNAs (23S and 16S). Processes some mRNAs, and tRNAs when they are encoded in the rRNA operon. Processes pre-crRNA and tracrRNA of type II CRISPR loci if present in the organism. In Enterococcus faecalis (strain ATCC 700802 / V583), this protein is Ribonuclease 3.